Reading from the N-terminus, the 209-residue chain is Transcription factor 23 (209 aa).

Disordered regions lie at residues 1-20 (MSQE…GHNK) and 54-85 (LSRA…ARER). Basic and acidic residues predominate over residues 72–85 (GRSEASPENAARER). The bHLH domain occupies 75–127 (EASPENAARERTRVKTLRQAFLALQAALPAVPPDTKLSKLDVLVLATSYIAHL).

In terms of assembly, forms inactive heterodimeric complex with TCF3. In terms of tissue distribution, highly expressed in the uterus (predominantly in myometrium), ovary, and testis. Expression in the uterus is higher in the diestrus phase than in the estrus phase and reaches a maximum at 7.5 dpc. Expression declines towards the time of delivery and returns to the non-pregnant level 4 days after delivery. Low expression seen in lung, heart, intestine, and spleen.

Its subcellular location is the nucleus. Functionally, inhibits E-box-mediated binding and transactivation of bHLH factors. Inhibitory effect is similar to that of ID proteins. Inhibits the formation of TCF3 and MYOD1 homodimers and heterodimers. Lacks DNA binding activity. May be involved in the regulation or modulation of smooth muscle contraction of the uterus during pregnancy and particularly around the time of delivery. Seems to play a role in the inhibition of myogenesis. In Mus musculus (Mouse), this protein is Transcription factor 23 (Tcf23).